The sequence spans 797 residues: Protocadherin-3 (797 aa).

The first 30 residues, 1-30 (METALAKIPQQRQVFFLTILSLLWKSSSEA), serve as a signal peptide directing secretion. Topologically, residues 31 to 691 (IRYSMPEETE…DNYDVLTLYL (661 aa)) are extracellular. Cadherin domains lie at 35–133 (MPEE…SPEF), 138–242 (MLLT…SPQF), 247–346 (YKVQ…APEL), 351–450 (LTVL…APAF), and 455–560 (YTMF…APFV). Residues asparagine 169, asparagine 276, and asparagine 417 are each glycosylated (N-linked (GlcNAc...) asparagine). Asparagine 566 carries an N-linked (GlcNAc...) asparagine glycan. One can recognise a Cadherin 6 domain in the interval 567 to 670 (ASAPCTELLP…VVDGFSQPYL (104 aa)). A helical membrane pass occupies residues 692–712 (VIALASVSSLFLLSVVLFVGV). At 713 to 797 (RLCRRAREAS…AVVHNSVGFY (85 aa)) the chain is on the cytoplasmic side.

As to expression, expressed in brain.

Its subcellular location is the cell membrane. Functionally, potential calcium-dependent cell-adhesion protein. May be involved in the establishment and maintenance of specific neuronal connections in the brain. The protein is Protocadherin-3 (Pcdh3) of Rattus norvegicus (Rat).